A 386-amino-acid polypeptide reads, in one-letter code: Patatin-04/09 (386 aa).

The first 23 residues, 1 to 23 (MATTKSFLILFFMILATTSSTCA), serve as a signal peptide directing secretion. The 198-residue stretch at 32–229 (LSIDGGGIKG…TVGDPALLSL (198 aa)) folds into the PNPLA domain. The GXGXXG motif lies at 36–41 (GGGIKG). Residues 75–79 (GTSTG) carry the GXSXG motif. Ser-77 acts as the Nucleophile in catalysis. A glycan (N-linked (GlcNAc...) asparagine) is linked at Asn-115. The active-site Proton acceptor is the Asp-215. The DGA/G motif lies at 215–217 (DGG). Positions 321–384 (ENALNGTTTE…DRKKLRANKA (64 aa)) form a coiled coil. The N-linked (GlcNAc...) asparagine glycan is linked to Asn-325.

Belongs to the patatin family. As to expression, tuber.

The protein resides in the vacuole. Functionally, probable lipolytic acyl hydrolase (LAH), an activity which is thought to be involved in the response of tubers to pathogens. This is Patatin-04/09 from Solanum tuberosum (Potato).